Reading from the N-terminus, the 464-residue chain is tRNA(Ile)-lysidine synthase (464 aa).

Residue 26–31 coordinates ATP; sequence SGGPDS.

Belongs to the tRNA(Ile)-lysidine synthase family.

It is found in the cytoplasm. The catalysed reaction is cytidine(34) in tRNA(Ile2) + L-lysine + ATP = lysidine(34) in tRNA(Ile2) + AMP + diphosphate + H(+). In terms of biological role, ligates lysine onto the cytidine present at position 34 of the AUA codon-specific tRNA(Ile) that contains the anticodon CAU, in an ATP-dependent manner. Cytidine is converted to lysidine, thus changing the amino acid specificity of the tRNA from methionine to isoleucine. This Geobacillus kaustophilus (strain HTA426) protein is tRNA(Ile)-lysidine synthase.